The primary structure comprises 338 residues: MKILVAMSGGVDSTVTAYKLKNLGHEVIGCYMKLHGKPNYHEENIKKVEKVANFLQIPYHILDLQEDFKNKVYMPFVDTYKEGKTPNPCALCNRFIKLGKLLEFAKSLGCEKLATGHYARLENNLIKTAVDESKDQSYFLASADKEALKYLIFPLGEMKKEDVKKFASTIEVLKSFATQKESSEICFVEDTYVQVLDQFMDTKIPGEVLDSSGKVVGKHEGYMHYTIGKRRGFEVRGAHEPHFVLKINPKQNQIIVGTKEELKISEFNLKNINLFIDAKELDCEVKIRYRSKSTPCKVEIYEDKSAKIILKDPVYGLASGQMAVFYDHDKVIASGFIE.

Residues Ala-6–Ser-13 and Met-32 each bind ATP. Cys-92 functions as the Nucleophile in the catalytic mechanism. An intrachain disulfide couples Cys-92 to Cys-186. Gly-116 is an ATP binding site. Positions Lys-134–Gln-136 are interaction with tRNA. The Cysteine persulfide intermediate role is filled by Cys-186. An interaction with tRNA region spans residues Arg-288–Tyr-289.

The protein belongs to the MnmA/TRMU family.

The protein localises to the cytoplasm. The enzyme catalyses S-sulfanyl-L-cysteinyl-[protein] + uridine(34) in tRNA + AH2 + ATP = 2-thiouridine(34) in tRNA + L-cysteinyl-[protein] + A + AMP + diphosphate + H(+). Functionally, catalyzes the 2-thiolation of uridine at the wobble position (U34) of tRNA, leading to the formation of s(2)U34. The sequence is that of tRNA-specific 2-thiouridylase MnmA from Campylobacter jejuni subsp. jejuni serotype O:2 (strain ATCC 700819 / NCTC 11168).